Reading from the N-terminus, the 273-residue chain is Dermonecrotic toxin LapSicTox-alphaII1 (273 aa).

His-5 is an active-site residue. Residues Glu-25 and Asp-27 each contribute to the Mg(2+) site. The Nucleophile role is filled by His-41. Disulfide bonds link Cys-45/Cys-51 and Cys-47/Cys-191. Asp-85 lines the Mg(2+) pocket.

Belongs to the arthropod phospholipase D family. Class II subfamily. Requires Mg(2+) as cofactor. As to expression, expressed by the venom gland.

The protein localises to the secreted. It catalyses the reaction an N-(acyl)-sphingosylphosphocholine = an N-(acyl)-sphingosyl-1,3-cyclic phosphate + choline. It carries out the reaction an N-(acyl)-sphingosylphosphoethanolamine = an N-(acyl)-sphingosyl-1,3-cyclic phosphate + ethanolamine. The catalysed reaction is a 1-acyl-sn-glycero-3-phosphocholine = a 1-acyl-sn-glycero-2,3-cyclic phosphate + choline. The enzyme catalyses a 1-acyl-sn-glycero-3-phosphoethanolamine = a 1-acyl-sn-glycero-2,3-cyclic phosphate + ethanolamine. In terms of biological role, dermonecrotic toxins cleave the phosphodiester linkage between the phosphate and headgroup of certain phospholipids (sphingolipid and lysolipid substrates), forming an alcohol (often choline) and a cyclic phosphate. This toxin acts on sphingomyelin (SM). It may also act on ceramide phosphoethanolamine (CPE), lysophosphatidylcholine (LPC) and lysophosphatidylethanolamine (LPE), but not on lysophosphatidylserine (LPS), and lysophosphatidylglycerol (LPG). It acts by transphosphatidylation, releasing exclusively cyclic phosphate products as second products. Induces dermonecrosis, hemolysis, increased vascular permeability, edema, inflammatory response, and platelet aggregation. The polypeptide is Dermonecrotic toxin LapSicTox-alphaII1 (Loxosceles apachea (Apache recluse spider)).